The following is a 404-amino-acid chain: F-box protein At2g17036 (404 aa).

The F-box domain maps to 2-50; sequence MDWATLPKDLLDLISKCLESSFDLIQFRSVCSSWRSAAGPKRLLWAHNL.

This is F-box protein At2g17036 from Arabidopsis thaliana (Mouse-ear cress).